We begin with the raw amino-acid sequence, 102 residues long: MLPDLSPHLHTKECNMLIEFLQRCHSEKPIGKMIGKCSYWDEAVWQCTKKERIWRRDNNPAYKRRIVELRSLPEKYWTPALHKLKEDGVLIGGADQSQGCKI.

The region spanning 11-55 is the CHCH domain; that stretch reads TKECNMLIEFLQRCHSEKPIGKMIGKCSYWDEAVWQCTKKERIWR. Short sequence motifs (cx9C motif) lie at residues 14-24 and 37-47; these read CNMLIEFLQRC and CSYWDEAVWQC. Cystine bridges form between Cys-14/Cys-47 and Cys-24/Cys-37.

The protein belongs to the CMC family.

The protein resides in the mitochondrion. In terms of biological role, may be involved in cytochrome c oxidase biogenesis. The chain is COX assembly mitochondrial protein 2 homolog from Caenorhabditis elegans.